Consider the following 107-residue polypeptide: Nucleoid-associated protein RBE_0048 (107 aa).

Belongs to the YbaB/EbfC family. As to quaternary structure, homodimer.

It is found in the cytoplasm. Its subcellular location is the nucleoid. Binds to DNA and alters its conformation. May be involved in regulation of gene expression, nucleoid organization and DNA protection. The sequence is that of Nucleoid-associated protein RBE_0048 from Rickettsia bellii (strain RML369-C).